Reading from the N-terminus, the 35-residue chain is U2-agatoxin-Aop1a (35 aa).

Intrachain disulfides connect Cys3–Cys19, Cys10–Cys24, and Cys18–Cys34. Leu35 carries the post-translational modification Leucine amide.

The protein belongs to the neurotoxin 01 (U2-agtx) family. Expressed by the venom gland.

The protein localises to the secreted. Its function is as follows. Insect-selective toxin causing rapid but reversible paralysis in crickets. Suppresses the excitatory postsynaptic potentials evoked in lobster neuromuscular synaptic preparations, possibly by blocking the presynaptic calcium channel (Cav). Induces instantaneous reversible paralysis when injected into crickets. The polypeptide is U2-agatoxin-Aop1a (Allagelena opulenta (Funnel weaving spider)).